Reading from the N-terminus, the 198-residue chain is 3-isopropylmalate dehydratase small subunit (198 aa).

Belongs to the LeuD family. LeuD type 1 subfamily. As to quaternary structure, heterodimer of LeuC and LeuD.

It catalyses the reaction (2R,3S)-3-isopropylmalate = (2S)-2-isopropylmalate. The protein operates within amino-acid biosynthesis; L-leucine biosynthesis; L-leucine from 3-methyl-2-oxobutanoate: step 2/4. Functionally, catalyzes the isomerization between 2-isopropylmalate and 3-isopropylmalate, via the formation of 2-isopropylmaleate. This is 3-isopropylmalate dehydratase small subunit from Mycobacterium leprae (strain Br4923).